The sequence spans 329 residues: Putative ubiquitin thioesterase otu1 (329 aa).

The UBX-like stretch occupies residues 7–89; the sequence is RLKYENQSAV…ATSFSTNEPA (83 aa). The disordered stretch occupies residues 85-127; sequence TNEPAKPPIPNAATKPTFPPQTEISNPPAVSHQSKNTSQDPPY. The span at 115 to 124 shows a compositional bias: polar residues; the sequence is SHQSKNTSQD. The region spanning 135–254 is the OTU domain; the sequence is IALRVMPDDN…GIHYDLAALA (120 aa). Residues 140–146 are cys-loop; the sequence is MPDDNSC. Aspartate 143 is a catalytic residue. The Nucleophile role is filled by cysteine 146. The tract at residues 193-203 is variable-loop; the sequence is IRKETSWGGYI. The interval 243–247 is his-loop; sequence YSGIH. Isoleucine 246 serves as a coordination point for substrate. The active site involves histidine 247. An S2 site region spans residues 272 to 277; sequence VTITPY. A C2H2-type zinc finger spans residues 299–323; sequence IRCTICGTGLVGEKDATAHALATGH. Residue histidine 323 is part of the active site.

The protein localises to the cytoplasm. Its subcellular location is the nucleus. It carries out the reaction Thiol-dependent hydrolysis of ester, thioester, amide, peptide and isopeptide bonds formed by the C-terminal Gly of ubiquitin (a 76-residue protein attached to proteins as an intracellular targeting signal).. Its function is as follows. Hydrolase that can remove conjugated ubiquitin from proteins and may therefore play an important regulatory role at the level of protein turnover by preventing degradation. Has a role in meiosis. This Schizosaccharomyces pombe (strain 972 / ATCC 24843) (Fission yeast) protein is Putative ubiquitin thioesterase otu1 (otu1).